The primary structure comprises 825 residues: Translation initiation factor IF-2 (825 aa).

Composition is skewed to basic and acidic residues over residues 1-19, 35-45, 70-98, and 113-122; these read MTKKQENETSKELGMDNKK, RKGEKKTEGKR, LLKDLKQKQRADEARLDQESKAAKQEYKK, and KKVESVEKPA. The interval 1 to 239 is disordered; the sequence is MTKKQENETS…TQRKDRPLPE (239 aa). The segment covering 158 to 169 has biased composition (low complexity); the sequence is PSSSRRPSSRPS. Basic residues predominate over residues 181 to 191; the sequence is GRRRKSGKPGR. Over residues 194–208 the composition is skewed to polar residues; it reads QNSYADQGRGANSNR. A compositionally biased stretch (basic residues) spans 211–220; it reads QRKRKNKKHQ. A tr-type G domain is found at 326 to 495; the sequence is VRPPVVTIMG…ILEADMLELK (170 aa). A G1 region spans residues 335–342; the sequence is GHVDHGKT. 335–342 is a binding site for GTP; sequence GHVDHGKT. Residues 360 to 364 form a G2 region; sequence GITQN. Residues 381–384 are G3; sequence DTPG. Residues 381–385 and 435–438 contribute to the GTP site; these read DTPGH and NKMD. Residues 435-438 form a G4 region; it reads NKMD. Residues 471–473 form a G5 region; the sequence is SAK.

Belongs to the TRAFAC class translation factor GTPase superfamily. Classic translation factor GTPase family. IF-2 subfamily.

The protein localises to the cytoplasm. One of the essential components for the initiation of protein synthesis. Protects formylmethionyl-tRNA from spontaneous hydrolysis and promotes its binding to the 30S ribosomal subunits. Also involved in the hydrolysis of GTP during the formation of the 70S ribosomal complex. The polypeptide is Translation initiation factor IF-2 (Lactobacillus delbrueckii subsp. bulgaricus (strain ATCC 11842 / DSM 20081 / BCRC 10696 / JCM 1002 / NBRC 13953 / NCIMB 11778 / NCTC 12712 / WDCM 00102 / Lb 14)).